The following is a 526-amino-acid chain: UDP-N-acetylmuramoyl-L-alanyl-D-glutamate--2,6-diaminopimelate ligase (526 aa).

UDP-N-acetyl-alpha-D-muramoyl-L-alanyl-D-glutamate contacts are provided by Leu-48 and Ser-50. Position 136 to 142 (136 to 142) interacts with ATP; the sequence is GTSGKTT. Residues 178-179, Ser-205, and Arg-213 each bind UDP-N-acetyl-alpha-D-muramoyl-L-alanyl-D-glutamate; that span reads TT. Lys-245 carries the N6-carboxylysine modification. Residues Arg-408, 432-435, Gly-490, and Glu-494 each bind meso-2,6-diaminopimelate; that span reads DNPR. The short motif at 432–435 is the Meso-diaminopimelate recognition motif element; it reads DNPR.

Belongs to the MurCDEF family. MurE subfamily. Mg(2+) serves as cofactor. Post-translationally, carboxylation is probably crucial for Mg(2+) binding and, consequently, for the gamma-phosphate positioning of ATP.

It localises to the cytoplasm. The catalysed reaction is UDP-N-acetyl-alpha-D-muramoyl-L-alanyl-D-glutamate + meso-2,6-diaminopimelate + ATP = UDP-N-acetyl-alpha-D-muramoyl-L-alanyl-gamma-D-glutamyl-meso-2,6-diaminopimelate + ADP + phosphate + H(+). The protein operates within cell wall biogenesis; peptidoglycan biosynthesis. In terms of biological role, catalyzes the addition of meso-diaminopimelic acid to the nucleotide precursor UDP-N-acetylmuramoyl-L-alanyl-D-glutamate (UMAG) in the biosynthesis of bacterial cell-wall peptidoglycan. The polypeptide is UDP-N-acetylmuramoyl-L-alanyl-D-glutamate--2,6-diaminopimelate ligase (Corynebacterium efficiens (strain DSM 44549 / YS-314 / AJ 12310 / JCM 11189 / NBRC 100395)).